We begin with the raw amino-acid sequence, 127 residues long: Glycine cleavage system H protein (127 aa).

The Lipoyl-binding domain maps to 23-104 (TALVGLTDYA…PYEAWFAKIT (82 aa)). Lys-64 carries the N6-lipoyllysine modification.

The protein belongs to the GcvH family. The glycine cleavage system is composed of four proteins: P, T, L and H. (R)-lipoate serves as cofactor.

In terms of biological role, the glycine cleavage system catalyzes the degradation of glycine. The H protein shuttles the methylamine group of glycine from the P protein to the T protein. The polypeptide is Glycine cleavage system H protein (Lachnoclostridium phytofermentans (strain ATCC 700394 / DSM 18823 / ISDg) (Clostridium phytofermentans)).